A 473-amino-acid polypeptide reads, in one-letter code: MVARTPQKQRKVAMVVPPLNSDLLKETINKVDKCMERLQELQYTIAGGTKVVSGVNLSPRSTRIYLKTSLRCKQETLRIKNATNKKSPVGKFPASSPGDWRKMSLPAMLLGETVNEILQASQVTRDIVDAIAPKKSRKSRRLTMSQEDDGPKTPETQQKSREQNPETVSSNIKARRKKEKQNRRSESDSPPSLQRARSRIAFRTISPQVKGNNGENSFRHLANRVSPKHKPWVKKAVLFPNPLFISGTATQQAKFSRTMSPVIARNEISSIKNNKETPYKFLIKSPPTSASKFQVKIRSPPKVLVSPTRNGSNSVRKSPRGSRSPTRTVNLGKKSASISPIRNTGKRSPKLSTAAKLRRSFTPTRNGSNLARKSSISPKRVTLQAFLSPTRNGNFCKKSPKASISPTRVCNKSQKLSTAAKFRRSFSPSRLAMRFVSPMKSRKSVAKCDDHEMVSGLKQRPVLVPKRFSIRRI.

Positions 1-132 are required for binding to TAN and location to the cortical division sites (CDS) during cytokinesis; that stretch reads MVARTPQKQR…VTRDIVDAIA (132 aa). Disordered regions lie at residues 131 to 218 and 290 to 354; these read IAPK…ENSF and ASKF…LSTA. 2 stretches are compositionally biased toward polar residues: residues 205–216 and 307–329; these read ISPQVKGNNGEN and PTRNGSNSVRKSPRGSRSPTRTV.

As to quaternary structure, interacts with POK1. Strongly expressed in flower buds and root tips.

It localises to the nucleus. The protein localises to the nucleolus. The protein resides in the cytoplasm. Its subcellular location is the cytoskeleton. It is found in the phragmoplast. Is required for spatial control cell division during plant development. Through an association with microtubules, acts both for the positioning of cytoskeletal arrays that establish planes of cell division during prophase and for spatial guidance of expanding phragmoplasts toward preestablished cortical division sites (CDS) during cytokinesis. This Arabidopsis thaliana (Mouse-ear cress) protein is Microtubule-binding protein TANGLED (TAN).